Consider the following 212-residue polypeptide: Large ribosomal subunit protein uL3 (212 aa).

Glutamine 153 bears the N5-methylglutamine mark.

Belongs to the universal ribosomal protein uL3 family. Part of the 50S ribosomal subunit. Forms a cluster with proteins L14 and L19. In terms of processing, methylated by PrmB.

In terms of biological role, one of the primary rRNA binding proteins, it binds directly near the 3'-end of the 23S rRNA, where it nucleates assembly of the 50S subunit. This is Large ribosomal subunit protein uL3 from Shewanella woodyi (strain ATCC 51908 / MS32).